A 105-amino-acid polypeptide reads, in one-letter code: U-scoloptoxin(05)-Sa2a (105 aa).

Residues 1–24 (MKEAVKMSCLCIFLFLFLFSLTDA) form the signal peptide. Residues 79–105 (HVPESNQKDGKVSTHMSSCNTDGCNAN) are disordered. Residues 92–105 (THMSSCNTDGCNAN) show a composition bias toward polar residues.

It belongs to the scoloptoxin-05 family. Contains 4 disulfide bonds. In terms of tissue distribution, expressed by the venom gland.

It localises to the secreted. This Scolopendra alternans (Florida Keys giant centipede) protein is U-scoloptoxin(05)-Sa2a.